The sequence spans 388 residues: Galactokinase (388 aa).

33 to 36 (EHTD) contacts substrate. ATP is bound by residues Ser67 and 124-130 (GAGLSSS). 2 residues coordinate Mg(2+): Ser130 and Glu162. The active-site Proton acceptor is Asp174. Residue Tyr224 participates in substrate binding.

Belongs to the GHMP kinase family. GalK subfamily.

It is found in the cytoplasm. The catalysed reaction is alpha-D-galactose + ATP = alpha-D-galactose 1-phosphate + ADP + H(+). Its pathway is carbohydrate metabolism; galactose metabolism. In terms of biological role, catalyzes the transfer of the gamma-phosphate of ATP to D-galactose to form alpha-D-galactose-1-phosphate (Gal-1-P). In Lacticaseibacillus paracasei (strain ATCC 334 / BCRC 17002 / CCUG 31169 / CIP 107868 / KCTC 3260 / NRRL B-441) (Lactobacillus paracasei), this protein is Galactokinase.